The chain runs to 256 residues: Follistatin-related protein 3 (256 aa).

The signal sequence occupies residues 1–23; the sequence is MRSGALWPLLWGALVWTVGSVGA. The TB domain occupies 34–105; it reads GVCWLQQGRE…SCDGVECGPG (72 aa). Cystine bridges form between Cys-36–Cys-59, Cys-46–Cys-90, Cys-60–Cys-93, Cys-97–Cys-108, Cys-102–Cys-117, Cys-119–Cys-151, Cys-123–Cys-144, and Cys-133–Cys-165. Residue Asn-71 is glycosylated (N-linked (GlcNAc...) asparagine). A Follistatin-like 1 domain is found at 97-117; it reads CDGVECGPGKACRMLGGRPHC. Kazal-like domains lie at 111–167 and 187–243; these read LGGR…RCQK and SAHC…ICTG. The 24-residue stretch at 168-191 folds into the Follistatin-like 2 domain; it reads SCAQVVCPRPQSCLVDQTGSAHCV. Cystine bridges form between Cys-193–Cys-227, Cys-198–Cys-220, and Cys-209–Cys-241. Residue Asn-213 is glycosylated (N-linked (GlcNAc...) asparagine).

As to quaternary structure, interacts with INHBA and INHBB. Interacts with FN1. Interacts with ADAM12. Interacts with MLLT10; the interaction enhances MLLT10 in vitro transcriptional activity and self-association. Interacts with MSTN. As to expression, abundantly expressed in heart, lung, kidney and testis. Continuously expressed in embryonic heart.

The protein resides in the secreted. Its subcellular location is the nucleus. Functionally, the secreted form is a binding and antagonizing protein for members of the TGF-beta family, such as activin, BMP2 and MSTN. Inhibits activin A-, activin B-, BMP2- and MSDT-induced cellular signaling; more effective on activin A than on activin B. Involved in bone formation; inhibits osteoclast differentiation. Involved in hematopoiesis; involved in differentiation of hemopoietic progenitor cells, increases hematopoietic cell adhesion to fibronectin and seems to contribute to the adhesion of hematopoietic precursor cells to the bone marrow stroma. The nuclear form is probably involved in transcriptional regulation via interaction with MLLT10. The chain is Follistatin-related protein 3 (Fstl3) from Mus musculus (Mouse).